The following is a 99-amino-acid chain: UPF0235 protein Avin_03050 (99 aa).

The interval 66–99 (VSLESGESNRQKRVRIRRPRQLPALPGLAPRPDA) is disordered. The span at 76 to 85 (QKRVRIRRPR) shows a compositional bias: basic residues.

It belongs to the UPF0235 family.

The polypeptide is UPF0235 protein Avin_03050 (Azotobacter vinelandii (strain DJ / ATCC BAA-1303)).